A 251-amino-acid chain; its full sequence is MLAKRIIPCLDIKNGRTVKGVNFVDLRDAGDPVELAEIYSREGADELVFLDISATEERRKTLVNMVRSVAEKINIPFTVGGGISSVEDVDILLNNGADKVSINSSAVKNPQLINDLAQKFGSQCVVVAIDAKQIDGQWIVHLVGGKVPTELNLFDWAVEVAERGAGEILFTSMDNDGTKNGFANEALAKLSELVNIPIIASGGAGNIQHFVDSFKEGKADAALAASVFHFKEIEIKALKQELRKNGVEVRL.

Active-site residues include aspartate 11 and aspartate 130.

The protein belongs to the HisA/HisF family. Heterodimer of HisH and HisF.

It is found in the cytoplasm. The enzyme catalyses 5-[(5-phospho-1-deoxy-D-ribulos-1-ylimino)methylamino]-1-(5-phospho-beta-D-ribosyl)imidazole-4-carboxamide + L-glutamine = D-erythro-1-(imidazol-4-yl)glycerol 3-phosphate + 5-amino-1-(5-phospho-beta-D-ribosyl)imidazole-4-carboxamide + L-glutamate + H(+). It participates in amino-acid biosynthesis; L-histidine biosynthesis; L-histidine from 5-phospho-alpha-D-ribose 1-diphosphate: step 5/9. Its function is as follows. IGPS catalyzes the conversion of PRFAR and glutamine to IGP, AICAR and glutamate. The HisF subunit catalyzes the cyclization activity that produces IGP and AICAR from PRFAR using the ammonia provided by the HisH subunit. This chain is Imidazole glycerol phosphate synthase subunit HisF, found in Flavobacterium johnsoniae (strain ATCC 17061 / DSM 2064 / JCM 8514 / BCRC 14874 / CCUG 350202 / NBRC 14942 / NCIMB 11054 / UW101) (Cytophaga johnsonae).